Reading from the N-terminus, the 466-residue chain is Soluble pyridine nucleotide transhydrogenase (466 aa).

FAD is bound at residue 36 to 45; the sequence is ERYQNVGGGC.

It belongs to the class-I pyridine nucleotide-disulfide oxidoreductase family. The cofactor is FAD.

It is found in the cytoplasm. The enzyme catalyses NAD(+) + NADPH = NADH + NADP(+). In terms of biological role, conversion of NADPH, generated by peripheral catabolic pathways, to NADH, which can enter the respiratory chain for energy generation. In Escherichia coli O81 (strain ED1a), this protein is Soluble pyridine nucleotide transhydrogenase.